Consider the following 200-residue polypeptide: NAD(P)H dehydrogenase (quinone) (200 aa).

A Flavodoxin-like domain is found at 4–191 (VLVLYYSSYG…DIARYQGKHV (188 aa)). Residues 10–15 (SSYGHV) and 79–81 (TRF) contribute to the FMN site. Y12 contacts NAD(+). W99 contributes to the substrate binding site. FMN-binding positions include 114–120 (STGTQHG) and H135.

The protein belongs to the WrbA family. The cofactor is FMN.

It carries out the reaction a quinone + NADH + H(+) = a quinol + NAD(+). It catalyses the reaction a quinone + NADPH + H(+) = a quinol + NADP(+). The protein is NAD(P)H dehydrogenase (quinone) of Burkholderia vietnamiensis (strain G4 / LMG 22486) (Burkholderia cepacia (strain R1808)).